Here is a 2286-residue protein sequence, read N- to C-terminus: Unconventional myosin-IXAb (2286 aa).

In terms of domain architecture, Ras-associating spans 16 to 114; the sequence is SEFTLRVYPG…YRFLLREKNL (99 aa). A Myosin motor domain is found at 148-971; sequence AQFVADLCSL…LRQRLQDELH (824 aa). The chain crosses the membrane as a helical span at residues 178 to 198; the sequence is IYTYVGSILIAVNPFKFLPIY. 242–249 is a binding site for ATP; it reads GESGSGKT. The actin-binding stretch occupies residues 853-875; sequence LNKLMETLGQSEPYFVKCIRSNA. IQ domains are found at residues 976–996, 1025–1054, 1066–1095, and 1089–1118; these read RRIV…HFCR, QQGA…AVLI, RNTA…AAVT, and QRRA…QQCR. Positions 976-1113 are neck or regulatory domain; it reads RRIVCLQRSF…QSRQRCRILR (138 aa). The tail stretch occupies residues 1114 to 2254; the sequence is EQQCREQSKH…PRANRSCPPK (1141 aa). 4 disordered regions span residues 1118–1279, 1308–1341, 1455–1588, and 1732–1754; these read REQS…QIRE, DVPL…FSVS, CEED…EPML, and DGTI…SDTV. A compositionally biased stretch (polar residues) spans 1123–1133; it reads HPSTVTKSLHQ. A compositionally biased stretch (basic and acidic residues) spans 1134–1149; the sequence is NTEEAEKLEEVWEKQT. Polar residues predominate over residues 1263 to 1273; that stretch reads PINSAPQTPNR. Residues 1455 to 1465 are compositionally biased toward acidic residues; sequence CEEDEDDEYED. A compositionally biased stretch (basic and acidic residues) spans 1485 to 1501; it reads CVFHSDSEMSSQKEQKR. Residues 1529–1542 show a composition bias toward basic residues; that stretch reads RGKMRFWSKSKHGD. Basic and acidic residues-rich tracts occupy residues 1550–1562 and 1572–1585; these read RSAD…RRND and GVSE…ENRE. The Phorbol-ester/DAG-type zinc-finger motif lies at 1759 to 1808; the sequence is GHIFKSTQYSIPTYCEFCSSLIWMMDKACVCKLCRYACHKKCCLRMTTKC. Residues 1823 to 2011 enclose the Rho-GAP domain; the sequence is VELSRLTSDE…LIICEQMRKY (189 aa). The segment covering 2032 to 2049 has biased composition (basic residues); that stretch reads LTHIRRSMGKSRARKSGH. Disordered regions lie at residues 2032–2087 and 2113–2286; these read LTHI…QQEE and PRAS…EFMV. A coiled-coil region spans residues 2080–2107; it reads QAAMQQEEKVLTQQIENLQKEKEELTYE. Composition is skewed to low complexity over residues 2176–2192 and 2200–2211; these read SLDS…SVSS and SSSSGPLFSSSS. Polar residues predominate over residues 2226-2238; it reads EQASLSARCASSS. Basic and acidic residues predominate over residues 2254-2270; that stretch reads KPREPGDTGGRRREHEF.

This sequence belongs to the TRAFAC class myosin-kinesin ATPase superfamily. Myosin family.

The protein localises to the membrane. The protein resides in the cytoplasm. It is found in the synapse. It localises to the cell projection. Its subcellular location is the growth cone. Functionally, myosins are actin-based motor molecules with ATPase activity. Unconventional myosins serve in intracellular movements. Regulates Rho by stimulating it's GTPase activity in neurons. Required for the regulation of neurite branching and motor neuron axon guidance. This chain is Unconventional myosin-IXAb (myo9ab), found in Danio rerio (Zebrafish).